The sequence spans 468 residues: ATP synthase subunit beta (468 aa).

155–162 (GGAGVGKT) lines the ATP pocket.

Belongs to the ATPase alpha/beta chains family. In terms of assembly, F-type ATPases have 2 components, CF(1) - the catalytic core - and CF(0) - the membrane proton channel. CF(1) has five subunits: alpha(3), beta(3), gamma(1), delta(1), epsilon(1). CF(0) has three main subunits: a(1), b(2) and c(9-12). The alpha and beta chains form an alternating ring which encloses part of the gamma chain. CF(1) is attached to CF(0) by a central stalk formed by the gamma and epsilon chains, while a peripheral stalk is formed by the delta and b chains.

It is found in the cell membrane. The enzyme catalyses ATP + H2O + 4 H(+)(in) = ADP + phosphate + 5 H(+)(out). Functionally, produces ATP from ADP in the presence of a proton gradient across the membrane. The catalytic sites are hosted primarily by the beta subunits. This chain is ATP synthase subunit beta, found in Streptococcus pyogenes serotype M6 (strain ATCC BAA-946 / MGAS10394).